We begin with the raw amino-acid sequence, 250 residues long: Ribonuclease HII (250 aa).

Residues 66–250 (QLVAGVDEVG…TFAPVSDFFK (185 aa)) form the RNase H type-2 domain. A divalent metal cation-binding residues include aspartate 72, glutamate 73, and aspartate 164.

It belongs to the RNase HII family. Requires Mn(2+) as cofactor. Mg(2+) serves as cofactor.

Its subcellular location is the cytoplasm. It carries out the reaction Endonucleolytic cleavage to 5'-phosphomonoester.. Endonuclease that specifically degrades the RNA of RNA-DNA hybrids. The chain is Ribonuclease HII from Lactobacillus acidophilus (strain ATCC 700396 / NCK56 / N2 / NCFM).